The chain runs to 218 residues: Probable nicotinate-nucleotide adenylyltransferase (218 aa).

The protein belongs to the NadD family.

The catalysed reaction is nicotinate beta-D-ribonucleotide + ATP + H(+) = deamido-NAD(+) + diphosphate. Its pathway is cofactor biosynthesis; NAD(+) biosynthesis; deamido-NAD(+) from nicotinate D-ribonucleotide: step 1/1. Its function is as follows. Catalyzes the reversible adenylation of nicotinate mononucleotide (NaMN) to nicotinic acid adenine dinucleotide (NaAD). The chain is Probable nicotinate-nucleotide adenylyltransferase from Acidithiobacillus ferrooxidans (strain ATCC 23270 / DSM 14882 / CIP 104768 / NCIMB 8455) (Ferrobacillus ferrooxidans (strain ATCC 23270)).